A 210-amino-acid chain; its full sequence is MWTFGRRAVAGLLASPSPAQAQTLARAPRLAELAQLCSRRGLRTGINATCTTHHTSSNLRGLNQIRNVKRQSVYLMNLRKSGTLGHPGSLDDTTYERLAEETLDSLAEFFEDLADKPYTFEDYDVSFGSGVLTVKLGGDLGTYVINKQTPNKQIWLSSPSSGPKRYDWTGKNWVYSHDGVSLHELLGAELTKALKTKLDLSSLAYSGKDA.

A mitochondrion-targeting transit peptide spans 1 to 41; it reads MWTFGRRAVAGLLASPSPAQAQTLARAPRLAELAQLCSRRG.

Belongs to the frataxin family. Component of the mitochondrial core iron-sulfur cluster (ISC) complex composed of NFS1, LYRM4, NDUFAB1, ISCU, FXN, and FDX2; this complex is a heterohexamer containing two copies of each monomer. Homodimer. Monomer (probable predominant form). Oligomer. Monomers and polymeric aggregates of &gt;1 MDa have been isolated from mitochondria. A small fraction of heterologous overexpressed recombinant frataxin forms high-molecular weight aggregates that incorporate iron. Interacts with LYRM4. Interacts (via ferrous form) with ISCU; the interaction is possible when both are bound to the dimeric form of the cysteine desulfurase complex (NFS1:LYRM4) and the interaction enhances FXN interaction to the dimeric form of the cysteine desulfurase complex (NFS1:LYRM4). Interacts with FECH; one iron-bound FXN monomer seems to interact with a FECH homodimer. Interacts with SDHA and SDHB. Interacts with ACO2; the interaction is dependent on citrate. Interacts with HSPA9. In terms of assembly, interacts with ACO1. Interacts with ISCU (cytoplasmic form). In terms of processing, processed in two steps by mitochondrial processing peptidase (MPP). MPP first cleaves the precursor to intermediate form and subsequently converts the intermediate to yield frataxin mature form (frataxin(81-210)) which is the predominant form. The additional forms, frataxin(56-210) and frataxin(78-210), seem to be produced when the normal maturation process is impaired; their physiological relevance is unsure.

Its subcellular location is the mitochondrion. It is found in the cytoplasm. The protein localises to the cytosol. The catalysed reaction is 4 Fe(2+) + O2 + 4 H(+) = 4 Fe(3+) + 2 H2O. Functionally, functions as an activator of persulfide transfer to the scaffoding protein ISCU as component of the core iron-sulfur cluster (ISC) assembly complex and participates to the [2Fe-2S] cluster assembly. Accelerates sulfur transfer from NFS1 persulfide intermediate to ISCU and to small thiols such as L-cysteine and glutathione leading to persulfuration of these thiols and ultimately sulfide release. Binds ferrous ion and is released from FXN upon the addition of both L-cysteine and reduced FDX2 during [2Fe-2S] cluster assembly. The core iron-sulfur cluster (ISC) assembly complex is involved in the de novo synthesis of a [2Fe-2S] cluster, the first step of the mitochondrial iron-sulfur protein biogenesis. This process is initiated by the cysteine desulfurase complex (NFS1:LYRM4:NDUFAB1) that produces persulfide which is delivered on the scaffold protein ISCU in a FXN-dependent manner. Then this complex is stabilized by FDX2 which provides reducing equivalents to accomplish the [2Fe-2S] cluster assembly. Finally, the [2Fe-2S] cluster is transferred from ISCU to chaperone proteins, including HSCB, HSPA9 and GLRX5. May play a role in the protection against iron-catalyzed oxidative stress through its ability to catalyze the oxidation of Fe(2+) to Fe(3+); the oligomeric form but not the monomeric form has in vitro ferroxidase activity. May be able to store large amounts of iron in the form of a ferrihydrite mineral by oligomerization; however, the physiological relevance is unsure as reports are conflicting and the function has only been shown using heterologous overexpression systems. May function as an iron chaperone protein that protects the aconitase [4Fe-4S]2+ cluster from disassembly and promotes enzyme reactivation. May play a role as a high affinity iron binding partner for FECH that is capable of both delivering iron to ferrochelatase and mediating the terminal step in mitochondrial heme biosynthesis. Its function is as follows. Modulates the RNA-binding activity of ACO1. May be involved in the cytoplasmic iron-sulfur protein biogenesis. May contribute to oxidative stress resistance and overall cell survival. This chain is Frataxin, mitochondrial, found in Macaca fascicularis (Crab-eating macaque).